The primary structure comprises 530 residues: Putative sulfate transporter YvdB (530 aa).

Transmembrane regions (helical) follow at residues 19 to 39, 41 to 61, 68 to 88, 91 to 111, 121 to 141, 164 to 184, 192 to 212, 241 to 261, 313 to 333, and 384 to 404; these read LIAG…FAIA, GVEP…ISLF, IGGP…QYGL, LLIA…FKLG, VIVG…IANF, LGTF…ILLV, VPGA…FFPD, MVML…ESIL, AVSP…LLVF, and VLFD…VFFI. In terms of domain architecture, STAS spans 420-530; the sequence is PVLAKREDPS…FFDHHDEITG (111 aa).

This sequence belongs to the SLC26A/SulP transporter (TC 2.A.53) family.

It is found in the cell membrane. The chain is Putative sulfate transporter YvdB (yvdB) from Bacillus subtilis (strain 168).